The sequence spans 161 residues: C-type lectin lectoxin-Lio3 (161 aa).

The signal sequence occupies residues 1–23 (MRRFIFMSLGLLVLAFSLSGIGA). Disulfide bonds link Cys-27–Cys-38, Cys-55–Cys-154, and Cys-129–Cys-146. In terms of domain architecture, C-type lectin spans 34–155 (HNISCYKLFT…CGLLHYFICQ (122 aa)). A glycan (N-linked (GlcNAc...) asparagine) is linked at Asn-35. Positions 117–119 (KGE) match the Mannose-binding motif. Positions 127, 142, and 143 each coordinate Ca(2+).

It belongs to the true venom lectin family. Expressed by the venom gland.

It localises to the secreted. Mannose-binding lectin which recognizes specific carbohydrate structures and agglutinates a variety of animal cells by binding to cell-surface glycoproteins and glycolipids. May be a calcium-dependent lectin. The chain is C-type lectin lectoxin-Lio3 from Erythrolamprus poecilogyrus (Water snake).